The sequence spans 285 residues: Tyrosine recombinase XerA (285 aa).

The 78-residue stretch at 7-84 (IVNSDILEEF…ALKSYFKFEG (78 aa)) folds into the Core-binding (CB) domain. Positions 100-274 (SLPKSLTEDE…TTKHLREAIE (175 aa)) constitute a Tyr recombinase domain. Residues Arg135, Lys160, His226, Arg229, and His252 contribute to the active site. Tyr261 (O-(3'-phospho-DNA)-tyrosine intermediate) is an active-site residue.

The protein belongs to the 'phage' integrase family. XerA subfamily.

The protein localises to the cytoplasm. Site-specific tyrosine recombinase, which acts by catalyzing the cutting and rejoining of the recombining DNA molecules. The polypeptide is Tyrosine recombinase XerA (Pyrococcus horikoshii (strain ATCC 700860 / DSM 12428 / JCM 9974 / NBRC 100139 / OT-3)).